Reading from the N-terminus, the 497-residue chain is Amino acid oxidase fsqB (497 aa).

FAD contacts are provided by V14, F15, D38, N53, A57, N58, R63, V64, and V211. C414 carries the S-8alpha-FAD cysteine modification. F447 and K448 together coordinate FAD.

Belongs to the MSOX/MTOX family. In terms of assembly, dimer. FAD is required as a cofactor.

It carries out the reaction (2S,4S,5S)-2-amino-6-(3,4-dihydroxyphenyl)-4-hydroxy-5-(methylamino)hexanoyl-[peptidyl-carrier protein] + O2 = (2S,4S)-2-amino-4-[(3S)-7,8-dihydroxy-1,2,3,4-tetrahydroisoquinolin-3-yl]-4-hydroxybutanoyl-[peptidyl-carrier protein] + H2O2. The catalysed reaction is N-methyl-L-dopa + O2 = (3S)-7,8-dihydroxy-1,2,3,4-tetrahydroisoquinoline-3-carboxylate + H2O2. It catalyses the reaction N-methyl-D-dopa + O2 = (3R)-7,8-dihydroxy-1,2,3,4-tetrahydroisoquinoline-3-carboxylate + H2O2. Its pathway is secondary metabolite biosynthesis. Amino acid oxidase; part of the gene cluster that mediates the biosynthesis of the isoquinoline alkaloids fumisoquin A, fumisoquin B and fumisoquin C; as well as small amounts of fumipyrrole as a shunt metabolite. The products of the cluster lead to a brown coloration and are important for growth and conidiation. The nonribosomal peptide synthetase-like protein fsqF, which lacks a canonical condensation domain, is required for addition of a serine-derived dehydroalanine moiety to activated tyrosine but is not essential for the subsequent steps leading to isoquinoline formation. A different enzyme, most likely the ATP-grasp enzyme fsqD, is responsible for activation of tyrosine. Three additional enzymes encoded by the fsq cluster, the N-methyltransferase fsqC, the phenol 2-monooxygenase fsqG and the FAD-dependent oxidase fsqB, catalyze the formation of the isoquinoline ring system in the fumisoquins. FsqB converts the fspF thiolation domain-bound (2S,4S,5S)-2-amino-6-(3,4-dihydroxyphenyl)-4-hydroxy-5-(methylamino)hexanoyl into isoquinoline. The cyclization most likely proceeds via a two-step mechanism, beginning with FAD-dependent oxidation of the methyl group to an iminium species followed by electrophilic attack on the deprotonated phenol. Functionally, is able to convert N-methyl-3,4-dihydroxy-DL-phenylalanine (N-methyl-DOPA) directly into cyclic isoquinoline, in vitro. The absence of the meta-hydroxyl group, as in L-N-methyl-tyrosine, leads to a 25-fold lower rate of reduction and the formation of the demethylated product L-tyrosine, instead of a cyclic product. Does not accept the D-stereoisomer of N-methyltyrosine, in contrast to N-methyl-DOPA, for which both stereoisomers are oxidized with similar rates. The chain is Amino acid oxidase fsqB from Aspergillus fumigatus (strain ATCC MYA-4609 / CBS 101355 / FGSC A1100 / Af293) (Neosartorya fumigata).